The primary structure comprises 541 residues: Phosphoenolpyruvate carboxykinase (ATP) (541 aa).

Position 243–250 (243–250 (GLSGTGKT)) interacts with ATP.

It belongs to the phosphoenolpyruvate carboxykinase (ATP) family.

It carries out the reaction oxaloacetate + ATP = phosphoenolpyruvate + ADP + CO2. It participates in carbohydrate biosynthesis; gluconeogenesis. In Eremothecium gossypii (strain ATCC 10895 / CBS 109.51 / FGSC 9923 / NRRL Y-1056) (Yeast), this protein is Phosphoenolpyruvate carboxykinase (ATP) (PCK1).